The sequence spans 485 residues: MALLVEKTSSGREYKVKDMSQADFGRLEIELAEVEMPGLVSCVTEFGPSQPLKGARITGSLHMTIQTAVLIETLTALGAEVRWCSCNIFSTQDHAAAAIARDSAAVFAWKGETLQEYWWCTERALDWGPGGGPDLIVDDGGDATLLIHEGVKAEEIFAKNGTFPDPTSTDNPEFQIVLSIIKDGLQVDPKKYHKMKERLVGVSEETTTGVKRLYQMQETGALLFPAINVNDSVTKSKFDNLYGCRHSLPDGLMRATDVMIAGKVAVICGYGDVGKGCAAAMKTAGARVIVTEIDPICALQALMEGLQVLTLEDVVSEADIFCTTTGNKDIIMVDHMRKMKNNAIVCNIGHFDNEIDMLGLETYPGVKRITIKPQTDRWVFPDTNSGIIVLAEGRLMNLGCATGHPSFVMSCSFTNQVIAQLELWNEKSSGKYEKKVYVLPKHLDEKVAALHLGKLGARLTKLTKDQSDYVSIPVEGPYKPVHYRY.

Threonine 64, aspartate 139, and glutamate 205 together coordinate substrate. 206–208 lines the NAD(+) pocket; that stretch reads TTT. Positions 235 and 239 each coordinate substrate. NAD(+) contacts are provided by residues asparagine 240, 269–274, glutamate 292, asparagine 327, 348–350, and asparagine 397; these read GYGDVG and IGH.

The protein belongs to the adenosylhomocysteinase family. Requires NAD(+) as cofactor.

It carries out the reaction S-adenosyl-L-homocysteine + H2O = L-homocysteine + adenosine. The protein operates within amino-acid biosynthesis; L-homocysteine biosynthesis; L-homocysteine from S-adenosyl-L-homocysteine: step 1/1. Functionally, adenosylhomocysteine is a competitive inhibitor of S-adenosyl-L-methionine-dependent methyl transferase reactions; therefore adenosylhomocysteinase may play a key role in the control of methylations via regulation of the intracellular concentration of adenosylhomocysteine. This chain is Adenosylhomocysteinase 2 (SAHH2), found in Arabidopsis thaliana (Mouse-ear cress).